A 264-amino-acid chain; its full sequence is Thymidylate synthase (264 aa).

Arg21 serves as a coordination point for dUMP. His51 contributes to the (6R)-5,10-methylene-5,6,7,8-tetrahydrofolate binding site. 126-127 (RR) contacts dUMP. Cys146 functions as the Nucleophile in the catalytic mechanism. DUMP contacts are provided by residues 166–169 (RSCD), Asn177, and 207–209 (HLY). Asp169 serves as a coordination point for (6R)-5,10-methylene-5,6,7,8-tetrahydrofolate. Ala263 contributes to the (6R)-5,10-methylene-5,6,7,8-tetrahydrofolate binding site.

Belongs to the thymidylate synthase family. Bacterial-type ThyA subfamily. In terms of assembly, homodimer.

It localises to the cytoplasm. It carries out the reaction dUMP + (6R)-5,10-methylene-5,6,7,8-tetrahydrofolate = 7,8-dihydrofolate + dTMP. It functions in the pathway pyrimidine metabolism; dTTP biosynthesis. Its function is as follows. Catalyzes the reductive methylation of 2'-deoxyuridine-5'-monophosphate (dUMP) to 2'-deoxythymidine-5'-monophosphate (dTMP) while utilizing 5,10-methylenetetrahydrofolate (mTHF) as the methyl donor and reductant in the reaction, yielding dihydrofolate (DHF) as a by-product. This enzymatic reaction provides an intracellular de novo source of dTMP, an essential precursor for DNA biosynthesis. The polypeptide is Thymidylate synthase (Escherichia fergusonii (strain ATCC 35469 / DSM 13698 / CCUG 18766 / IAM 14443 / JCM 21226 / LMG 7866 / NBRC 102419 / NCTC 12128 / CDC 0568-73)).